The chain runs to 204 residues: Large ribosomal subunit protein mL67 (204 aa).

It belongs to the mitochondrion-specific ribosomal protein mL67 family.

The protein localises to the nucleus. The protein resides in the mitochondrion. Its function is as follows. Transcription factor involved in regulation of RNA polymerase II-dependent transcription. Also involved in regulation of mitochondrial DNA recombination, maintenance and repair, and generation of homoplasmic cells. The polypeptide is Large ribosomal subunit protein mL67 (MHR1) (Yarrowia lipolytica (strain CLIB 122 / E 150) (Yeast)).